The primary structure comprises 392 residues: Y' element ATP-dependent helicase YFL066C (392 aa).

The Helicase ATP-binding domain maps to 1-175 (MADTPSVAVQ…LQRIGLTGLA (175 aa)). Residue 11–18 (APPGYGKT) participates in ATP binding. In terms of domain architecture, Helicase C-terminal spans 232-381 (KLLLALFEIE…EFYGLESKKG (150 aa)).

It belongs to the helicase family. Yeast subtelomeric Y' repeat subfamily.

Catalyzes DNA unwinding and is involved in telomerase-independent telomere maintenance. The protein is Y' element ATP-dependent helicase YFL066C of Saccharomyces cerevisiae (strain ATCC 204508 / S288c) (Baker's yeast).